The primary structure comprises 783 residues: Protein involved in starch initiation 1 (783 aa).

A chloroplast-targeting transit peptide spans 1–27; it reads MGFSQAIRLNLASFSSPSPCDYCLTRV. 3 coiled-coil regions span residues 128–309, 345–432, and 457–512; these read LHDA…LKEE, LVFS…LELA, and LQEK…LKAL.

As to quaternary structure, interacts with PTST2; the interaction is essential for the initiation of starch granules biosynthesis in leaf chloroplasts. Interacts with SS4; the interaction is essential for the initiation of starch granules biosynthesis in leaf chloroplasts.

It localises to the plastid. The protein localises to the chloroplast. Required for the initiation of starch granules biosynthesis in leaf chloroplasts. Involved in determining starch granule number and size in chloroplasts. The chain is Protein involved in starch initiation 1 from Arabidopsis thaliana (Mouse-ear cress).